The primary structure comprises 432 residues: MSKLTPWWSRKSQQLTKIIPWGTENVNTFQNDVIAKRVLRTRKVKLNPTKQQKMMLMKFADAARYSYNAAVSAVNDKTHNPNKIELQNAFLSLKRRDGTYNKFFQKRRWLLGCPQPIRQQAIFEAANNFKSAFTNLKNKNIDHFKMTYKTKKHQRKCGFSLGIGTHLKHNDGVLIILPRNLGQVRYFGSVPFEGKPDAECRIQRDPYGDHWLLVPVYKTTKTQTTKPIVAIDPGVRTPFACFGSNGGSKTLGEDMNAKLTDIRTRVSLVDRRISKCQDVSLKRKMREHRRRLFRKHQRVRDAYHWEIIKDITNEYSGVLLPPFETQRVSRMLKNKTNCSMLGISHFTFRMRMKGKCEEKGLLYTEPTEEYTSKTCGVCGQINYLLGSKKTFECFCGNVCDRDIHAARNILLKWLSTEAGARVVETFLASRSS.

4 residues coordinate Zn(2+): C375, C378, C393, and C395.

The protein in the N-terminal section; belongs to the transposase 2 family. In the C-terminal section; belongs to the transposase 35 family.

This Chlorella (PBCV-1) protein is Putative transposase A625R.